We begin with the raw amino-acid sequence, 88 residues long: Small ribosomal subunit protein bS16 (88 aa).

The protein belongs to the bacterial ribosomal protein bS16 family.

The polypeptide is Small ribosomal subunit protein bS16 (Desulfitobacterium hafniense (strain DSM 10664 / DCB-2)).